The sequence spans 261 residues: Pantothenate synthetase (261 aa).

29–36 provides a ligand contact to ATP; the sequence is MGALHNGH. The Proton donor role is filled by His36. Position 60 (Gln60) interacts with (R)-pantoate. Gln60 is a binding site for beta-alanine. 147–150 contacts ATP; sequence GEKD. Gln153 is a binding site for (R)-pantoate. Residue 184 to 187 coordinates ATP; sequence LSSR.

It belongs to the pantothenate synthetase family. In terms of assembly, homodimer.

The protein localises to the cytoplasm. The catalysed reaction is (R)-pantoate + beta-alanine + ATP = (R)-pantothenate + AMP + diphosphate + H(+). It participates in cofactor biosynthesis; (R)-pantothenate biosynthesis; (R)-pantothenate from (R)-pantoate and beta-alanine: step 1/1. Functionally, catalyzes the condensation of pantoate with beta-alanine in an ATP-dependent reaction via a pantoyl-adenylate intermediate. This chain is Pantothenate synthetase, found in Francisella tularensis subsp. novicida (strain U112).